The sequence spans 458 residues: Probable plasmid replicative DNA helicase (458 aa).

The 265-residue stretch at 194–458 (KIDYVDGLPT…GKFTIQKEAW (265 aa)) folds into the SF4 helicase domain. 225–232 (ARPAMGKT) contributes to the ATP binding site.

The protein belongs to the helicase family. DnaB subfamily. As to quaternary structure, homohexamer.

It carries out the reaction Couples ATP hydrolysis with the unwinding of duplex DNA at the replication fork by translocating in the 5'-3' direction. This creates two antiparallel DNA single strands (ssDNA). The leading ssDNA polymer is the template for DNA polymerase III holoenzyme which synthesizes a continuous strand.. The catalysed reaction is ATP + H2O = ADP + phosphate + H(+). Functionally, a replicative DNA helicase, it participates in initiation and elongation during DNA replication. Travels ahead of the DNA replisome, separating dsDNA into templates for DNA synthesis. A processive ATP-dependent 5'-3' DNA helicase it has DNA-dependent ATPase activity. The polypeptide is Probable plasmid replicative DNA helicase (Chlamydia psittaci (Chlamydophila psittaci)).